Reading from the N-terminus, the 1077-residue chain is Adenylate cyclase type 4 (1077 aa).

Topologically, residues 1-28 (MARLFSPRPPPSEDLFYETYYSLSQQYP) are cytoplasmic. The next 6 membrane-spanning stretches (helical) occupy residues 29 to 50 (LLIL…VAWA), 61 to 80 (FLTT…GLAS), 94 to 117 (GLIW…VSAW), 120 to 138 (VSFF…PLGM), 141 to 162 (AAAA…YLGW), and 170 to 190 (LLPQ…VGAY). Residues 191-582 (HKALMERALR…YRLSALPAFK (392 aa)) lie on the Cytoplasmic side of the membrane. Residues Asp278, Ile279, and Asp322 each coordinate Mg(2+). ATP-binding positions include 278 to 283 (DIVGFT), 320 to 322 (LGD), and Arg366. Residues 503–524 (TSTPLPEKAFSPQWSLDRSRTP) are disordered. Residue Ser517 is modified to Phosphoserine. Thr533 carries the phosphothreonine modification. A run of 3 helical transmembrane segments spans residues 583-604 (YYAA…LVTT), 608-630 (ALII…CFSE), and 661-684 (VALG…FLPV). Topologically, residues 685 to 717 (SSDCLFLASNVSSVTFNASWEMPGSLPLISIPL) are extracellular. 2 N-linked (GlcNAc...) asparagine glycosylation sites follow: Asn694 and Asn701. Helical transmembrane passes span 718–738 (ISIP…SLFL), 746–766 (LLLL…SHAW), and 793–809 (MGAI…LVLA). Residues 810 to 1077 (RQNEYYCRLD…LTRTGSPSAS (268 aa)) are Cytoplasmic-facing. ATP is bound by residues Lys927, 1007 to 1009 (DIW), 1014 to 1018 (NVASR), and Lys1054.

This sequence belongs to the adenylyl cyclase class-4/guanylyl cyclase family. Requires Mg(2+) as cofactor. The cofactor is Mn(2+).

The protein resides in the cell membrane. It is found in the cytoplasm. The catalysed reaction is ATP = 3',5'-cyclic AMP + diphosphate. Activated by forskolin. Insensitive to calcium/calmodulin. Stimulated by GNAS and by the G-protein beta and gamma subunit complex. Catalyzes the formation of the signaling molecule cAMP in response to G-protein signaling. This is Adenylate cyclase type 4 (Adcy4) from Mus musculus (Mouse).